A 437-amino-acid chain; its full sequence is tRNA pseudouridine synthase Pus10 (437 aa).

In terms of domain architecture, THUMP spans 76–198 (VARDVVEHLS…GGGVDIQVNS (123 aa)). Asp253 (nucleophile) is an active-site residue. Positions 321 and 394 each coordinate substrate.

Belongs to the pseudouridine synthase Pus10 family.

It carries out the reaction uridine(54) in tRNA = pseudouridine(54) in tRNA. The enzyme catalyses uridine(55) in tRNA = pseudouridine(55) in tRNA. Its function is as follows. Responsible for synthesis of pseudouridine from uracil-54 and uracil-55 in the psi GC loop of transfer RNAs. In Aeropyrum pernix (strain ATCC 700893 / DSM 11879 / JCM 9820 / NBRC 100138 / K1), this protein is tRNA pseudouridine synthase Pus10.